We begin with the raw amino-acid sequence, 235 residues long: Phosphoribosylaminoimidazole-succinocarboxamide synthase (235 aa).

Belongs to the SAICAR synthetase family.

It catalyses the reaction 5-amino-1-(5-phospho-D-ribosyl)imidazole-4-carboxylate + L-aspartate + ATP = (2S)-2-[5-amino-1-(5-phospho-beta-D-ribosyl)imidazole-4-carboxamido]succinate + ADP + phosphate + 2 H(+). The protein operates within purine metabolism; IMP biosynthesis via de novo pathway; 5-amino-1-(5-phospho-D-ribosyl)imidazole-4-carboxamide from 5-amino-1-(5-phospho-D-ribosyl)imidazole-4-carboxylate: step 1/2. The sequence is that of Phosphoribosylaminoimidazole-succinocarboxamide synthase from Prosthecochloris aestuarii (strain DSM 271 / SK 413).